The primary structure comprises 593 residues: DNA primase (593 aa).

The CHC2-type zinc finger occupies 38-62; sequence CPFHQEKTPSFTVSDSKRFFYCFGC. Positions 250–332 constitute a Toprim domain; it reads NRSILVEGYF…EKKISFIRLP (83 aa). Positions 256, 300, and 302 each coordinate Mg(2+).

It belongs to the DnaG primase family. In terms of assembly, monomer. Interacts with DnaB. It depends on Zn(2+) as a cofactor. The cofactor is Mg(2+).

It carries out the reaction ssDNA + n NTP = ssDNA/pppN(pN)n-1 hybrid + (n-1) diphosphate.. RNA polymerase that catalyzes the synthesis of short RNA molecules used as primers for DNA polymerase during DNA replication. This Rickettsia typhi (strain ATCC VR-144 / Wilmington) protein is DNA primase.